Consider the following 205-residue polypeptide: Probable molybdenum cofactor guanylyltransferase (205 aa).

GTP is bound by residues 10 to 12, lysine 22, aspartate 69, and aspartate 100; that span reads LAG. Aspartate 100 contributes to the Mg(2+) binding site.

The protein belongs to the MobA family. It depends on Mg(2+) as a cofactor.

The protein resides in the cytoplasm. It carries out the reaction Mo-molybdopterin + GTP + H(+) = Mo-molybdopterin guanine dinucleotide + diphosphate. Its function is as follows. Transfers a GMP moiety from GTP to Mo-molybdopterin (Mo-MPT) cofactor (Moco or molybdenum cofactor) to form Mo-molybdopterin guanine dinucleotide (Mo-MGD) cofactor. The sequence is that of Probable molybdenum cofactor guanylyltransferase from Natranaerobius thermophilus (strain ATCC BAA-1301 / DSM 18059 / JW/NM-WN-LF).